A 329-amino-acid polypeptide reads, in one-letter code: Ketol-acid reductoisomerase (NADP(+)) (329 aa).

A KARI N-terminal Rossmann domain is found at 2–182 (TQLFYDTDAD…GGTRAGILET (181 aa)). NADP(+) is bound by residues 25-28 (YGSQ), serine 51, serine 53, and 83-86 (DEFQ). Residue histidine 108 is part of the active site. Residue glycine 134 participates in NADP(+) binding. A KARI C-terminal knotted domain is found at 183-328 (NFKEETETDL…KGLRAMFSWL (146 aa)). Positions 191, 195, 227, and 231 each coordinate Mg(2+). A substrate-binding site is contributed by serine 252.

It belongs to the ketol-acid reductoisomerase family. Mg(2+) serves as cofactor.

The catalysed reaction is (2R)-2,3-dihydroxy-3-methylbutanoate + NADP(+) = (2S)-2-acetolactate + NADPH + H(+). It catalyses the reaction (2R,3R)-2,3-dihydroxy-3-methylpentanoate + NADP(+) = (S)-2-ethyl-2-hydroxy-3-oxobutanoate + NADPH + H(+). Its pathway is amino-acid biosynthesis; L-isoleucine biosynthesis; L-isoleucine from 2-oxobutanoate: step 2/4. It participates in amino-acid biosynthesis; L-valine biosynthesis; L-valine from pyruvate: step 2/4. Its function is as follows. Involved in the biosynthesis of branched-chain amino acids (BCAA). Catalyzes an alkyl-migration followed by a ketol-acid reduction of (S)-2-acetolactate (S2AL) to yield (R)-2,3-dihydroxy-isovalerate. In the isomerase reaction, S2AL is rearranged via a Mg-dependent methyl migration to produce 3-hydroxy-3-methyl-2-ketobutyrate (HMKB). In the reductase reaction, this 2-ketoacid undergoes a metal-dependent reduction by NADPH to yield (R)-2,3-dihydroxy-isovalerate. The protein is Ketol-acid reductoisomerase (NADP(+)) of Prochlorococcus marinus subsp. pastoris (strain CCMP1986 / NIES-2087 / MED4).